Here is a 145-residue protein sequence, read N- to C-terminus: Photosystem I reaction center subunit VI-1, chloroplastic (145 aa).

The N-terminal 50 residues, Met-1–Ala-50, are a transit peptide targeting the chloroplast. The chain crosses the membrane as a helical span at residues Leu-102–Val-118.

The protein belongs to the psaH family.

It localises to the plastid. The protein localises to the chloroplast thylakoid membrane. Possible role could be the docking of the LHC I antenna complex to the core complex. This Arabidopsis thaliana (Mouse-ear cress) protein is Photosystem I reaction center subunit VI-1, chloroplastic (PSAH1).